Here is a 188-residue protein sequence, read N- to C-terminus: Protein Cripto (188 aa).

The first 30 residues, 1 to 30, serve as a signal peptide directing secretion; that stretch reads MDCRKMARFSYSVIWIMAISKVFELGLVAG. An EGF-like domain is found at 78 to 107; the sequence is LNRTCCLNGGTCMLGSFCACPPSFYGRNCE. N-linked (GlcNAc...) asparagine glycosylation occurs at Asn-79. 6 disulfides stabilise this stretch: Cys-82–Cys-89, Cys-83–Cys-95, Cys-97–Cys-106, Cys-115–Cys-133, Cys-128–Cys-149, and Cys-131–Cys-140. The GPI-anchor amidated aspartate moiety is linked to residue Asp-150. Residues 151–188 constitute a propeptide, removed in mature form; that stretch reads GLVMDEHLVASRTPELPPSARTTTFMLVGICLSIQSYY.

Belongs to the EGF-CFC (Cripto-1/FRL1/Cryptic) family. In terms of assembly, interacts with the activin type-1 receptor ACVR1B. Post-translationally, the GPI-anchor is attached to the protein in the endoplasmic reticulum and serves to target the protein to the cell surface. There, it is processed by GPI processing phospholipase A2 (TMEM8A), removing an acyl-chain at the sn-2 position of GPI and releasing CRIPTO as a lysophosphatidylinositol-bearing form, which is further cleaved by phospholipase D (GPLD1) into a soluble form. Preferentially expressed in gastric and colorectal carcinomas than in their normal counterparts. Expressed in breast and lung.

It localises to the cell membrane. The protein resides in the secreted. Its function is as follows. GPI-anchored cell membrane protein involved in Nodal signaling. Cell-associated CRIPTO acts as a Nodal coreceptor in cis. Shedding of CRIPTO by TMEM8A modulates Nodal signaling by allowing soluble CRIPTO to act as a Nodal coreceptor on other cells. Could play a role in the determination of the epiblastic cells that subsequently give rise to the mesoderm. In Homo sapiens (Human), this protein is Protein Cripto.